A 125-amino-acid chain; its full sequence is Larval cuticle protein LCP-14 (125 aa).

An N-terminal signal peptide occupies residues 1-16; that stretch reads MKSFIVALCVVGCVLA. The 70-residue stretch at 33-102 folds into the Chitin-binding type R&amp;R domain; the sequence is EGSYNYAFES…PQADFLPTPP (70 aa).

Component of the cuticle of the larva of tobacco hornworm. The sequence is that of Larval cuticle protein LCP-14 (LCP-14) from Manduca sexta (Tobacco hawkmoth).